The primary structure comprises 532 residues: Cytokinin dehydrogenase 1 (532 aa).

The N-terminal stretch at 1–17 (MAAIYLLIAALIASSHA) is a signal peptide. N-linked (GlcNAc...) asparagine glycans are attached at residues Asn-52 and Asn-63. The region spanning 65 to 244 (TAALPAAVLF…TRARVAVEPA (180 aa)) is the FAD-binding PCMH-type domain. FAD-binding residues include Phe-100, Gly-102, Arg-103, and Gly-104. Pros-8alpha-FAD histidine is present on His-105. Residues Ser-106 and Gln-110 each contribute to the FAD site. Asn-133 carries an N-linked (GlcNAc...) asparagine glycan. Positions 168, 173, 179, 183, and 234 each coordinate FAD. 2 N-linked (GlcNAc...) asparagine glycosylation sites follow: Asn-321 and Asn-432. The FAD site is built by Tyr-490, Ser-525, and Gln-528.

It belongs to the oxygen-dependent FAD-linked oxidoreductase family. In terms of assembly, monomer. The cofactor is FAD.

It is found in the secreted. The protein localises to the extracellular space. It carries out the reaction N(6)-dimethylallyladenine + A + H2O = 3-methyl-2-butenal + adenine + AH2. Its function is as follows. Catalyzes the oxidation of cytokinins, a family of N(6)-substituted adenine derivatives that are plant hormones, where the substituent is an isopentenyl group. This chain is Cytokinin dehydrogenase 1 (CKX1), found in Oryza sativa subsp. japonica (Rice).